Reading from the N-terminus, the 110-residue chain is Protein YcgL (110 aa).

A YcgL domain is found at 14–98 (MFCVIYRSSK…PPEDLLKQHL (85 aa)). Residues 88 to 110 (PPPEDLLKQHLSSVGQNTSPADR) are disordered. Polar residues predominate over residues 97–110 (HLSSVGQNTSPADR).

The chain is Protein YcgL from Salmonella paratyphi A (strain ATCC 9150 / SARB42).